A 458-amino-acid chain; its full sequence is UDP-N-acetylmuramate--L-alanine ligase (458 aa).

118 to 124 (GTHGKTT) serves as a coordination point for ATP.

It belongs to the MurCDEF family.

It localises to the cytoplasm. It carries out the reaction UDP-N-acetyl-alpha-D-muramate + L-alanine + ATP = UDP-N-acetyl-alpha-D-muramoyl-L-alanine + ADP + phosphate + H(+). The protein operates within cell wall biogenesis; peptidoglycan biosynthesis. Cell wall formation. The chain is UDP-N-acetylmuramate--L-alanine ligase from Clostridium acetobutylicum (strain ATCC 824 / DSM 792 / JCM 1419 / IAM 19013 / LMG 5710 / NBRC 13948 / NRRL B-527 / VKM B-1787 / 2291 / W).